The primary structure comprises 174 residues: ATP-dependent protease subunit HslV (174 aa).

Thr-2 is a catalytic residue. Na(+)-binding residues include Gly-157, Cys-160, and Thr-163.

Belongs to the peptidase T1B family. HslV subfamily. A double ring-shaped homohexamer of HslV is capped on each side by a ring-shaped HslU homohexamer. The assembly of the HslU/HslV complex is dependent on binding of ATP.

The protein resides in the cytoplasm. It carries out the reaction ATP-dependent cleavage of peptide bonds with broad specificity.. Its activity is regulated as follows. Allosterically activated by HslU binding. Protease subunit of a proteasome-like degradation complex believed to be a general protein degrading machinery. The protein is ATP-dependent protease subunit HslV of Shewanella loihica (strain ATCC BAA-1088 / PV-4).